We begin with the raw amino-acid sequence, 221 residues long: Putative 5'(3')-deoxyribonucleotidase R824 (221 aa).

Residues aspartate 16 and aspartate 18 each coordinate Mg(2+). The active-site Nucleophile is aspartate 18. Residues aspartate 18, serine 103, and lysine 138 each contribute to the phosphate site. Aspartate 149 is a binding site for Mg(2+).

The protein belongs to the 5'(3')-deoxyribonucleotidase family. The cofactor is Mg(2+).

Dephosphorylates the 5' and 2'(3')-phosphates of deoxyribonucleotides. The chain is Putative 5'(3')-deoxyribonucleotidase R824 from Acanthamoeba polyphaga mimivirus (APMV).